A 338-amino-acid polypeptide reads, in one-letter code: Anthranilate phosphoribosyltransferase (338 aa).

Residues Gly-80, 83–84 (GD), Thr-88, 90–93 (NIST), 108–116 (KHGNRAVSS), and Ser-120 contribute to the 5-phospho-alpha-D-ribose 1-diphosphate site. An anthranilate-binding site is contributed by Gly-80. Ser-92 is a binding site for Mg(2+). Asn-111 lines the anthranilate pocket. An anthranilate-binding site is contributed by Arg-166. 2 residues coordinate Mg(2+): Asp-225 and Glu-226.

It belongs to the anthranilate phosphoribosyltransferase family. As to quaternary structure, homodimer. Mg(2+) is required as a cofactor.

It carries out the reaction N-(5-phospho-beta-D-ribosyl)anthranilate + diphosphate = 5-phospho-alpha-D-ribose 1-diphosphate + anthranilate. It functions in the pathway amino-acid biosynthesis; L-tryptophan biosynthesis; L-tryptophan from chorismate: step 2/5. Catalyzes the transfer of the phosphoribosyl group of 5-phosphorylribose-1-pyrophosphate (PRPP) to anthranilate to yield N-(5'-phosphoribosyl)-anthranilate (PRA). This Thermoanaerobacter sp. (strain X514) protein is Anthranilate phosphoribosyltransferase.